The following is an 882-amino-acid chain: Alanine--tRNA ligase (882 aa).

Zn(2+) contacts are provided by His-571, His-575, Cys-673, and His-677.

Belongs to the class-II aminoacyl-tRNA synthetase family. Zn(2+) is required as a cofactor.

It is found in the cytoplasm. It catalyses the reaction tRNA(Ala) + L-alanine + ATP = L-alanyl-tRNA(Ala) + AMP + diphosphate. In terms of biological role, catalyzes the attachment of alanine to tRNA(Ala) in a two-step reaction: alanine is first activated by ATP to form Ala-AMP and then transferred to the acceptor end of tRNA(Ala). Also edits incorrectly charged Ser-tRNA(Ala) and Gly-tRNA(Ala) via its editing domain. In Desulfotalea psychrophila (strain LSv54 / DSM 12343), this protein is Alanine--tRNA ligase.